An 89-amino-acid polypeptide reads, in one-letter code: Sodium channel toxin To13 (89 aa).

The first 18 residues, 1-18 (MKTLFLIITSFILLEVEG), serve as a signal peptide directing secretion. In terms of domain architecture, LCN-type CS-alpha/beta spans 20–87 (KNGYPRDSKG…TWKNKEPKCK (68 aa)). 4 disulfides stabilise this stretch: Cys30-Cys86, Cys34-Cys60, Cys45-Cys67, and Cys49-Cys69.

The protein belongs to the long (4 C-C) scorpion toxin superfamily. Sodium channel inhibitor family. Expressed by the venom gland.

It is found in the secreted. Functionally, inhibits voltage-gated sodium channels (Nav). The protein is Sodium channel toxin To13 of Tityus obscurus (Amazonian scorpion).